The sequence spans 460 residues: Kynureninase (460 aa).

Residues Leu-127, Thr-128, 165–168 (FPSD), Asp-249, His-252, and Tyr-274 each bind pyridoxal 5'-phosphate. Position 275 is an N6-(pyridoxal phosphate)lysine (Lys-275). Pyridoxal 5'-phosphate-binding residues include Trp-304 and Asn-332.

This sequence belongs to the kynureninase family. As to quaternary structure, homodimer. Pyridoxal 5'-phosphate serves as cofactor.

The protein localises to the cytoplasm. It catalyses the reaction L-kynurenine + H2O = anthranilate + L-alanine + H(+). The catalysed reaction is 3-hydroxy-L-kynurenine + H2O = 3-hydroxyanthranilate + L-alanine + H(+). It functions in the pathway amino-acid degradation; L-kynurenine degradation; L-alanine and anthranilate from L-kynurenine: step 1/1. Its pathway is cofactor biosynthesis; NAD(+) biosynthesis; quinolinate from L-kynurenine: step 2/3. Its function is as follows. Catalyzes the cleavage of L-kynurenine (L-Kyn) and L-3-hydroxykynurenine (L-3OHKyn) into anthranilic acid (AA) and 3-hydroxyanthranilic acid (3-OHAA), respectively. This Monosiga brevicollis (Choanoflagellate) protein is Kynureninase.